Here is a 325-residue protein sequence, read N- to C-terminus: uncharacterized protein (325 aa).

Coiled coils occupy residues 38–69 (VHVA…QNQS) and 201–229 (ANTD…LEFK).

This is an uncharacterized protein from Acanthamoeba polyphaga (Amoeba).